The following is a 110-amino-acid chain: Phosphoribosyl-ATP pyrophosphatase (110 aa).

This sequence belongs to the PRA-PH family.

The protein resides in the cytoplasm. It catalyses the reaction 1-(5-phospho-beta-D-ribosyl)-ATP + H2O = 1-(5-phospho-beta-D-ribosyl)-5'-AMP + diphosphate + H(+). The protein operates within amino-acid biosynthesis; L-histidine biosynthesis; L-histidine from 5-phospho-alpha-D-ribose 1-diphosphate: step 2/9. This Pseudomonas syringae pv. syringae (strain B728a) protein is Phosphoribosyl-ATP pyrophosphatase.